A 427-amino-acid polypeptide reads, in one-letter code: Dihydroorotase (427 aa).

Positions 58 and 60 each coordinate Zn(2+). Residues 60–62 (HLR) and asparagine 92 contribute to the substrate site. Residues aspartate 150, histidine 177, and histidine 230 each coordinate Zn(2+). Asparagine 276 contacts substrate. Aspartate 303 lines the Zn(2+) pocket. Aspartate 303 is an active-site residue. Substrate is bound by residues histidine 307 and 321–322 (FG).

It belongs to the metallo-dependent hydrolases superfamily. DHOase family. Class I DHOase subfamily. The cofactor is Zn(2+).

The catalysed reaction is (S)-dihydroorotate + H2O = N-carbamoyl-L-aspartate + H(+). Its pathway is pyrimidine metabolism; UMP biosynthesis via de novo pathway; (S)-dihydroorotate from bicarbonate: step 3/3. Catalyzes the reversible cyclization of carbamoyl aspartate to dihydroorotate. The chain is Dihydroorotase from Macrococcus caseolyticus (strain JCSC5402) (Macrococcoides caseolyticum).